A 553-amino-acid polypeptide reads, in one-letter code: Dihydroxy-acid dehydratase (553 aa).

Aspartate 78 is a binding site for Mg(2+). Cysteine 119 is a binding site for [2Fe-2S] cluster. Mg(2+) is bound by residues aspartate 120 and lysine 121. N6-carboxylysine is present on lysine 121. Cysteine 193 contacts [2Fe-2S] cluster. Position 441 (glutamate 441) interacts with Mg(2+). The active-site Proton acceptor is serine 467.

Belongs to the IlvD/Edd family. In terms of assembly, homodimer. [2Fe-2S] cluster serves as cofactor. It depends on Mg(2+) as a cofactor.

The enzyme catalyses (2R)-2,3-dihydroxy-3-methylbutanoate = 3-methyl-2-oxobutanoate + H2O. It catalyses the reaction (2R,3R)-2,3-dihydroxy-3-methylpentanoate = (S)-3-methyl-2-oxopentanoate + H2O. It participates in amino-acid biosynthesis; L-isoleucine biosynthesis; L-isoleucine from 2-oxobutanoate: step 3/4. The protein operates within amino-acid biosynthesis; L-valine biosynthesis; L-valine from pyruvate: step 3/4. Functionally, functions in the biosynthesis of branched-chain amino acids. Catalyzes the dehydration of (2R,3R)-2,3-dihydroxy-3-methylpentanoate (2,3-dihydroxy-3-methylvalerate) into 2-oxo-3-methylpentanoate (2-oxo-3-methylvalerate) and of (2R)-2,3-dihydroxy-3-methylbutanoate (2,3-dihydroxyisovalerate) into 2-oxo-3-methylbutanoate (2-oxoisovalerate), the penultimate precursor to L-isoleucine and L-valine, respectively. This is Dihydroxy-acid dehydratase from Geobacter metallireducens (strain ATCC 53774 / DSM 7210 / GS-15).